The sequence spans 196 residues: FMN-dependent NADH:quinone oxidoreductase (196 aa).

Position 10 (Ser-10) interacts with FMN.

This sequence belongs to the azoreductase type 1 family. As to quaternary structure, homodimer. It depends on FMN as a cofactor.

It carries out the reaction 2 a quinone + NADH + H(+) = 2 a 1,4-benzosemiquinone + NAD(+). It catalyses the reaction N,N-dimethyl-1,4-phenylenediamine + anthranilate + 2 NAD(+) = 2-(4-dimethylaminophenyl)diazenylbenzoate + 2 NADH + 2 H(+). Functionally, quinone reductase that provides resistance to thiol-specific stress caused by electrophilic quinones. In terms of biological role, also exhibits azoreductase activity. Catalyzes the reductive cleavage of the azo bond in aromatic azo compounds to the corresponding amines. The polypeptide is FMN-dependent NADH:quinone oxidoreductase (Cereibacter sphaeroides (strain KD131 / KCTC 12085) (Rhodobacter sphaeroides)).